The following is a 306-amino-acid chain: NAD kinase 1 (306 aa).

D67 acts as the Proton acceptor in catalysis. Residues 67–68, 149–150, D181, and 192–197 each bind NAD(+); these read DG, NE, and TGYTVS.

The protein belongs to the NAD kinase family. Requires a divalent metal cation as cofactor.

The protein resides in the cytoplasm. It catalyses the reaction NAD(+) + ATP = ADP + NADP(+) + H(+). Involved in the regulation of the intracellular balance of NAD and NADP, and is a key enzyme in the biosynthesis of NADP. Catalyzes specifically the phosphorylation on 2'-hydroxyl of the adenosine moiety of NAD to yield NADP. The sequence is that of NAD kinase 1 from Trichormus variabilis (strain ATCC 29413 / PCC 7937) (Anabaena variabilis).